Consider the following 502-residue polypeptide: Cytochrome P450 2J3 (502 aa).

Cys-448 is a binding site for heme.

It belongs to the cytochrome P450 family. Requires heme as cofactor. Abundantly expressed in heart and liver.

It is found in the endoplasmic reticulum membrane. Its subcellular location is the microsome membrane. It catalyses the reaction an organic molecule + reduced [NADPH--hemoprotein reductase] + O2 = an alcohol + oxidized [NADPH--hemoprotein reductase] + H2O + H(+). This enzyme metabolizes arachidonic acid predominantly via a NADPH-dependent olefin epoxidation mainly to 14,15-, 11,12-, and 8,9-epoxyeicosatrienoic acids (EET). It also acts as an omega-1-hydroxylase by metabolizing arachidonic acid to 19-hydroxyeicosatetraenoic acid (19-OH-AA). This Rattus norvegicus (Rat) protein is Cytochrome P450 2J3 (Cyp2j3).